The primary structure comprises 228 residues: Cytochrome c oxidase subunit 2 (228 aa).

Residues 1 to 26 lie on the Mitochondrial intermembrane side of the membrane; it reads MATWANLGLQDSSSPLMEQLNFFHDH. The helical transmembrane segment at 27 to 47 threads the bilayer; that stretch reads TLLILTMITILVGYIMGMLMF. The Mitochondrial matrix segment spans residues 48-60; sequence NQFTNRYLLHGQT. The helical transmembrane segment at 61-81 threads the bilayer; the sequence is IEIIWTVLPAIILMFIALPSL. The Mitochondrial intermembrane portion of the chain corresponds to 82–228; it reads RLLYLMDEIN…FIKWITNMTN (147 aa). Residues histidine 161, cysteine 196, glutamate 198, cysteine 200, histidine 204, and methionine 207 each contribute to the Cu cation site. Glutamate 198 lines the Mg(2+) pocket.

Belongs to the cytochrome c oxidase subunit 2 family. Component of the cytochrome c oxidase (complex IV, CIV), a multisubunit enzyme composed of a catalytic core of 3 subunits and several supernumerary subunits. The complex exists as a monomer or a dimer and forms supercomplexes (SCs) in the inner mitochondrial membrane with ubiquinol-cytochrome c oxidoreductase (cytochrome b-c1 complex, complex III, CIII). Cu cation serves as cofactor.

The protein resides in the mitochondrion inner membrane. It carries out the reaction 4 Fe(II)-[cytochrome c] + O2 + 8 H(+)(in) = 4 Fe(III)-[cytochrome c] + 2 H2O + 4 H(+)(out). Its function is as follows. Component of the cytochrome c oxidase, the last enzyme in the mitochondrial electron transport chain which drives oxidative phosphorylation. The respiratory chain contains 3 multisubunit complexes succinate dehydrogenase (complex II, CII), ubiquinol-cytochrome c oxidoreductase (cytochrome b-c1 complex, complex III, CIII) and cytochrome c oxidase (complex IV, CIV), that cooperate to transfer electrons derived from NADH and succinate to molecular oxygen, creating an electrochemical gradient over the inner membrane that drives transmembrane transport and the ATP synthase. Cytochrome c oxidase is the component of the respiratory chain that catalyzes the reduction of oxygen to water. Electrons originating from reduced cytochrome c in the intermembrane space (IMS) are transferred via the dinuclear copper A center (CU(A)) of subunit 2 and heme A of subunit 1 to the active site in subunit 1, a binuclear center (BNC) formed by heme A3 and copper B (CU(B)). The BNC reduces molecular oxygen to 2 water molecules using 4 electrons from cytochrome c in the IMS and 4 protons from the mitochondrial matrix. The polypeptide is Cytochrome c oxidase subunit 2 (COXII) (Anopheles quadrimaculatus (Common malaria mosquito)).